The following is a 550-amino-acid chain: MCDMGGLDNLIANTAYLQARKSSEGDAKELQKRRKSLSLPPPDVSRNEVKETITLDYQSICVEQPIGQRLFKDFLATVPEYKLAEDFLEEVKEWELEEGSAKEQLMEKLVSRRFKEPAEGSLNFLGKDLSSRIQQAQSKDMPELILLAKDSGNAFLMDAPFQDFQNSPFYDRFLQWKAFERQPINQKYFYEFRILGKGGFGEVCAIQVKNTGQMYACKKLDKKRLKKKNGEKMALLEKEILEKVHSPFIVSLAYAYETKTHLCLVMSLMNGGDLKFHIYNVGDKGVEIKRVIFYSAQICCGILHLHSLKIVYRDMKPENVLLDDHGNCRLSDLGLAVKVKEGKAITQRAGTNGYMAPEILTDEDYSYPVDWFAMGCSIFEMIAAYTPFRDPKEKTSKEELKRKTLEDEVVFPLPTFTEEAKDICRLFLAKKPQNRLGSRTNDDDPRKHAFFKSINFQRLEAGMVDPPFVPDPSVVYAKDISDIADFSEVKGIEFDDKDAKLFKRFSTGAVPISWQKEIIDTGLFDELNDPSREVTGGGNSGEKSGVCSIL.

The interval 22–45 (SSEGDAKELQKRRKSLSLPPPDVS) is disordered. Serine 36 is modified (phosphoserine). The region spanning 57-174 (YQSICVEQPI…QNSPFYDRFL (118 aa)) is the RGS domain. Residues 189-451 (FYEFRILGKG…DDDPRKHAFF (263 aa)) enclose the Protein kinase domain. Residues 195-203 (LGKGGFGEV) and lysine 218 each bind ATP. Catalysis depends on aspartate 314, which acts as the Proton acceptor. Positions 452–517 (KSINFQRLEA…GAVPISWQKE (66 aa)) constitute an AGC-kinase C-terminal domain. Residue serine 487 is modified to Phosphoserine. Positions 531 to 550 (SREVTGGGNSGEKSGVCSIL) are disordered. A Cysteine methyl ester modification is found at cysteine 547. Cysteine 547 carries the S-geranylgeranyl cysteine lipid modification. A propeptide spans 548–550 (SIL) (removed in mature form).

The protein belongs to the protein kinase superfamily. AGC Ser/Thr protein kinase family. GPRK subfamily. Post-translationally, autophosphorylated in vitro at Ser-487. Phosphorylation at Ser-36 is regulated by light and activated by cAMP. Retina, cones.

Its subcellular location is the membrane. It catalyses the reaction L-threonyl-[rhodopsin] + ATP = O-phospho-L-threonyl-[rhodopsin] + ADP + H(+). It carries out the reaction L-seryl-[rhodopsin] + ATP = O-phospho-L-seryl-[rhodopsin] + ADP + H(+). Its function is as follows. Retina-specific kinase involved in the shutoff of the photoresponse and adaptation to changing light conditions via cone opsin phosphorylation, including rhodopsin (RHO). The chain is Rhodopsin kinase grk7-b (grk7-b) from Xenopus laevis (African clawed frog).